The chain runs to 419 residues: Adenylosuccinate synthetase 1 (419 aa).

11 to 17 (GDEGKGK) is a GTP binding site. The active-site Proton acceptor is aspartate 12. Mg(2+) contacts are provided by aspartate 12 and glycine 39. IMP is bound by residues 12–15 (DEGK), 37–40 (NAGH), arginine 138, glutamine 220, and arginine 298. Residue histidine 40 is the Proton donor of the active site. Substrate is bound at residue 294-300 (TVSKRPR). Residues arginine 300, 326 to 328 (NVD), and 407 to 409 (SYG) each bind GTP.

It belongs to the adenylosuccinate synthetase family. In terms of assembly, homodimer. The cofactor is Mg(2+).

It is found in the cytoplasm. It catalyses the reaction IMP + L-aspartate + GTP = N(6)-(1,2-dicarboxyethyl)-AMP + GDP + phosphate + 2 H(+). The protein operates within purine metabolism; AMP biosynthesis via de novo pathway; AMP from IMP: step 1/2. In terms of biological role, plays an important role in the de novo pathway of purine nucleotide biosynthesis. Catalyzes the first committed step in the biosynthesis of AMP from IMP. The sequence is that of Adenylosuccinate synthetase 1 from Photorhabdus laumondii subsp. laumondii (strain DSM 15139 / CIP 105565 / TT01) (Photorhabdus luminescens subsp. laumondii).